Reading from the N-terminus, the 690-residue chain is Ras guanyl-releasing protein 3 (690 aa).

One can recognise an N-terminal Ras-GEF domain in the interval 3–125 (SSGLGKAATL…SLIDISSIPS (123 aa)). The 232-residue stretch at 152–383 (EPIELAEHLT…YKLSLVLEPR (232 aa)) folds into the Ras-GEF domain. EF-hand domains follow at residues 420–455 (HIRK…FPFL) and 458–484 (FCVL…AKSQ). Ca(2+) is bound by residues Asp-433, Asp-435, Asp-437, Tyr-439, Asp-444, Asp-462, Asp-464, Asp-466, and Glu-473. A Phorbol-ester/DAG-type zinc finger spans residues 494–544 (IHNFQEMTYLKPTFCEHCAGFLWGIIKQGYKCKDCGANCHKQCKDLLVLAC). The segment at 667 to 690 (VDRGTEFELDQDEGEETRQDGEDG) is disordered.

Belongs to the RASGRP family.

In terms of biological role, guanine nucleotide exchange factor (GEF) for Ras and Rap1. The protein is Ras guanyl-releasing protein 3 (RASGRP3) of Homo sapiens (Human).